Here is a 332-residue protein sequence, read N- to C-terminus: MTISQAAGNVCTVSALNTKKHQTTNSVDSEVIYLPNTDCTIKSQACLSAFTSYRVGGAADLYVAPRNLEALQASLKYAKEGDLKVTTLGAGSNLLVSDGGISGLVIATRHLRFSHFDPQTGQLTVAAGESIPSLAWAAAELGWQGLEWAVGIPGTAGGAVVMNAGAHNSCIADMLVSAEVLSPDGTLETLTPEQLGYSYRTSLLQGGDRIVTQATLQLAPGADPAKVVAITKEHKKHRLSTQPYNFPSCGSVFRNPKPYSAGWLIEQTGLKGYQIGGAQVALLHANFIVNRGGAKASDIFCLIRHIQHQVQERWSINLEPEVKMLGEFQGAC.

The region spanning 55-221 (VGGAADLYVA…TQATLQLAPG (167 aa)) is the FAD-binding PCMH-type domain. Residue R200 is part of the active site. Catalysis depends on S251, which acts as the Proton donor. E321 is an active-site residue.

It belongs to the MurB family. FAD serves as cofactor.

It localises to the cytoplasm. The catalysed reaction is UDP-N-acetyl-alpha-D-muramate + NADP(+) = UDP-N-acetyl-3-O-(1-carboxyvinyl)-alpha-D-glucosamine + NADPH + H(+). It participates in cell wall biogenesis; peptidoglycan biosynthesis. Its function is as follows. Cell wall formation. The polypeptide is UDP-N-acetylenolpyruvoylglucosamine reductase (Nostoc punctiforme (strain ATCC 29133 / PCC 73102)).